Reading from the N-terminus, the 757-residue chain is MIEAIGNQYVVARPVYSTKTFGEEFKKTHRHHKTFLDHLKGCCSCSSQKAKKIALSLFPIASWLPAYKIKEWLLSDIVSGISTGLVAVLQGLAFALLVNIPPAYGLYAAFFPVITYFFLGTSRHISVGPFPVLSMMVGVVVTRVVSDPNASSELSSSSTENDSFIEEKVMVAASVTVLSGIIQLLLGVLQVGFVVIYLSESLISGFTTAAAIHVLVSQLKFMLQLPVPAYSDPFSIFKVLESVFTQIQKTNIADLVTSVIILVVVFVFKEINQRYRSKLPVPIPIELIMTVIATGVSYGCNFEDRFGVAVVGNMSLGFQPPITPSVEVFQDTIGDSFGIAIVGFAVAFSVASVYSLKYDYPIDGNQELIALGVSNIFTGAFKGFAGSTALSRSGVQESTGGKTQVAGLLSAVIVLIVIVAIGFLLQPLQKSVLAALALGNLKGMLMQFAEIGRLWKKDKYDCLIWIMTFIFAIVLGLGLGLAASVAFQLLTIVFRTQFPKCSTLANVGRSNIYKNKKNYAEVYEPEGVKIFRCPSPIYFANIGFFKQKLIDAVGFSPLRILRKRNKALKKIRKLQKRGLIQMTPKGFICTSDGFKDSDEELDNNQIEELDQPINTTDLPFDIDWNGDLPLNITIPKISLHSLILDFSAVSFLDVSSMRGLRTILQEFIRIKVDVYIVGTDDDFIDKLARCEFFDDEVTDSIFFLTIHDAILHILMKKDYSTSKFNSSQEKERKFDFTINTNGGLRNRECQVPVETKF.

At 1-71 (MIEAIGNQYV…SWLPAYKIKE (71 aa)) the chain is on the cytoplasmic side. A helical transmembrane segment spans residues 72 to 92 (WLLSDIVSGISTGLVAVLQGL). Residue Ala-93 is a topological domain, extracellular. Residues 94–114 (FALLVNIPPAYGLYAAFFPVI) traverse the membrane as a helical segment. Over 115–124 (TYFFLGTSRH) the chain is Cytoplasmic. The helical transmembrane segment at 125 to 145 (ISVGPFPVLSMMVGVVVTRVV) threads the bilayer. Residues 146-176 (SDPNASSELSSSSTENDSFIEEKVMVAASVT) are Extracellular-facing. Residues Asn-149 and Asn-161 are each glycosylated (N-linked (GlcNAc...) asparagine). The helical transmembrane segment at 177-197 (VLSGIIQLLLGVLQVGFVVIY) threads the bilayer. The Cytoplasmic segment spans residues 198–201 (LSES). The helical transmembrane segment at 202–222 (LISGFTTAAAIHVLVSQLKFM) threads the bilayer. Topologically, residues 223–250 (LQLPVPAYSDPFSIFKVLESVFTQIQKT) are extracellular. A helical transmembrane segment spans residues 251–271 (NIADLVTSVIILVVVFVFKEI). At 272 to 278 (NQRYRSK) the chain is on the cytoplasmic side. A helical membrane pass occupies residues 279–299 (LPVPIPIELIMTVIATGVSYG). At 300 to 335 (CNFEDRFGVAVVGNMSLGFQPPITPSVEVFQDTIGD) the chain is on the extracellular side. The helical transmembrane segment at 336–356 (SFGIAIVGFAVAFSVASVYSL) threads the bilayer. Residues 357–367 (KYDYPIDGNQE) lie on the Cytoplasmic side of the membrane. The chain crosses the membrane as a helical span at residues 368–388 (LIALGVSNIFTGAFKGFAGST). Topologically, residues 389–404 (ALSRSGVQESTGGKTQ) are extracellular. A helical membrane pass occupies residues 405 to 425 (VAGLLSAVIVLIVIVAIGFLL). Over 426-462 (QPLQKSVLAALALGNLKGMLMQFAEIGRLWKKDKYDC) the chain is Cytoplasmic. A helical transmembrane segment spans residues 463 to 483 (LIWIMTFIFAIVLGLGLGLAA). Residues 484 to 757 (SVAFQLLTIV…ECQVPVETKF (274 aa)) are Extracellular-facing. An STAS domain is found at 518-713 (NYAEVYEPEG…LTIHDAILHI (196 aa)). The short motif at 754-757 (ETKF) is the PDZ-binding element.

The protein belongs to the SLC26A/SulP transporter (TC 2.A.53) family. As to quaternary structure, interacts with PDZK1. Interacts with CFTR, SLC26A6 and NHERF1. Interacts (via PDZ-binding motif) with NHERF4 (via the third PDZ domain). This interaction leads to decreased expression of SLC26A3 on the cell membrane resulting in its reduced exchanger activity. Post-translationally, N-glycosylation is required for efficient cell surface expression, and protection from proteolytic degradation. As to expression, expressed in spermatogenic cells. Expressed at high levels in cecum and colon and at lower levels in small intestine.

Its subcellular location is the apical cell membrane. The protein resides in the membrane. It localises to the cell membrane. The catalysed reaction is hydrogencarbonate(in) + 2 chloride(out) = hydrogencarbonate(out) + 2 chloride(in). Functionally, mediates chloride-bicarbonate exchange with a chloride bicarbonate stoichiometry of 2:1 in the intestinal epithelia. Plays a role in the chloride and bicarbonate homeostasis during sperm epididymal maturation and capacitation. This Mus musculus (Mouse) protein is Chloride anion exchanger (Slc26a3).